We begin with the raw amino-acid sequence, 682 residues long: Potassium-transporting ATPase ATP-binding subunit (682 aa).

The next 4 membrane-spanning stretches (helical) occupy residues 35-55, 62-82, 219-239, and 254-274; these read VMFIVWVGSLLTTLLAIAMAG, ATFTAAVSIWLWFTVLFANFA, IALTILLIALTLVFLLATATI, and VLVALLVCLIPTTIGGLLSAI. Residue Asp-307 is the 4-aspartylphosphate intermediate of the active site. Residues Asp-344, Glu-348, 377-384, and Lys-395 contribute to the ATP site; that span reads FTAQTRMS. Residues Asp-518 and Asp-522 each coordinate Mg(2+). 3 consecutive transmembrane segments (helical) span residues 588–608, 616–636, and 656–676; these read FAIIPAAFAAVYPQLAMLNVM, AILSAVIFNALIIVFLIPLAL, and IYGLGGLLVPFIGIKAIDLLL.

Belongs to the cation transport ATPase (P-type) (TC 3.A.3) family. Type IA subfamily. As to quaternary structure, the system is composed of three essential subunits: KdpA, KdpB and KdpC.

The protein localises to the cell inner membrane. The enzyme catalyses K(+)(out) + ATP + H2O = K(+)(in) + ADP + phosphate + H(+). Part of the high-affinity ATP-driven potassium transport (or Kdp) system, which catalyzes the hydrolysis of ATP coupled with the electrogenic transport of potassium into the cytoplasm. This subunit is responsible for energy coupling to the transport system and for the release of the potassium ions to the cytoplasm. In Klebsiella pneumoniae subsp. pneumoniae (strain ATCC 700721 / MGH 78578), this protein is Potassium-transporting ATPase ATP-binding subunit.